Reading from the N-terminus, the 96-residue chain is Co-chaperonin GroES (96 aa).

The protein belongs to the GroES chaperonin family. As to quaternary structure, heptamer of 7 subunits arranged in a ring. Interacts with the chaperonin GroEL.

Its subcellular location is the cytoplasm. Its function is as follows. Together with the chaperonin GroEL, plays an essential role in assisting protein folding. The GroEL-GroES system forms a nano-cage that allows encapsulation of the non-native substrate proteins and provides a physical environment optimized to promote and accelerate protein folding. GroES binds to the apical surface of the GroEL ring, thereby capping the opening of the GroEL channel. The sequence is that of Co-chaperonin GroES from Albidiferax ferrireducens (strain ATCC BAA-621 / DSM 15236 / T118) (Rhodoferax ferrireducens).